The primary structure comprises 264 residues: Purine nucleoside phosphorylase slr1573 (264 aa).

The Zn(2+) site is built by His61, Cys104, and His121.

The protein belongs to the purine nucleoside phosphorylase YfiH/LACC1 family. As to quaternary structure, homodimer. Cu(2+) serves as cofactor. Requires Zn(2+) as cofactor.

The enzyme catalyses adenosine + phosphate = alpha-D-ribose 1-phosphate + adenine. The catalysed reaction is S-methyl-5'-thioadenosine + phosphate = 5-(methylsulfanyl)-alpha-D-ribose 1-phosphate + adenine. It catalyses the reaction inosine + phosphate = alpha-D-ribose 1-phosphate + hypoxanthine. It carries out the reaction adenosine + H2O + H(+) = inosine + NH4(+). Functionally, purine nucleoside enzyme that catalyzes the phosphorolysis of adenosine and inosine nucleosides, yielding D-ribose 1-phosphate and the respective free bases, adenine and hypoxanthine. Also catalyzes the phosphorolysis of S-methyl-5'-thioadenosine into adenine and S-methyl-5-thio-alpha-D-ribose 1-phosphate. Also has adenosine deaminase activity. This Synechocystis sp. (strain ATCC 27184 / PCC 6803 / Kazusa) protein is Purine nucleoside phosphorylase slr1573.